The chain runs to 72 residues: Translation initiation factor IF-1 (72 aa).

Residues 1-72 (MTKEDSFEMH…SKGRIIFRSR (72 aa)) form the S1-like domain.

The protein belongs to the IF-1 family. In terms of assembly, component of the 30S ribosomal translation pre-initiation complex which assembles on the 30S ribosome in the order IF-2 and IF-3, IF-1 and N-formylmethionyl-tRNA(fMet); mRNA recruitment can occur at any time during PIC assembly.

It is found in the cytoplasm. Functionally, one of the essential components for the initiation of protein synthesis. Stabilizes the binding of IF-2 and IF-3 on the 30S subunit to which N-formylmethionyl-tRNA(fMet) subsequently binds. Helps modulate mRNA selection, yielding the 30S pre-initiation complex (PIC). Upon addition of the 50S ribosomal subunit IF-1, IF-2 and IF-3 are released leaving the mature 70S translation initiation complex. This chain is Translation initiation factor IF-1, found in Blochmanniella pennsylvanica (strain BPEN).